We begin with the raw amino-acid sequence, 107 residues long: N(4)-acetylcytidine amidohydrolase (107 aa).

The ASCH domain maps to threonine 9 to isoleucine 105. Lysine 23 serves as the catalytic Proton acceptor. Threonine 26 serves as the catalytic Nucleophile. Glutamate 76 serves as the catalytic Proton donor.

This sequence belongs to the N(4)-acetylcytidine amidohydrolase family.

The catalysed reaction is N(4)-acetylcytidine + H2O = cytidine + acetate + H(+). It carries out the reaction N(4)-acetyl-2'-deoxycytidine + H2O = 2'-deoxycytidine + acetate + H(+). The enzyme catalyses N(4)-acetylcytosine + H2O = cytosine + acetate + H(+). Functionally, catalyzes the hydrolysis of N(4)-acetylcytidine (ac4C). The polypeptide is N(4)-acetylcytidine amidohydrolase (Vibrio parahaemolyticus serotype O3:K6 (strain RIMD 2210633)).